A 333-amino-acid chain; its full sequence is Geminin coiled-coil domain-containing protein 1 (333 aa).

Residues 83 to 118 (QLYRNKQLQDTLLQKEEELARLHEENNHLRQYLNST) are a coiled coil. Residues 145–154 (KEKRKPKEHR) show a composition bias toward basic residues. Positions 145–165 (KEKRKPKEHRHSPAEIPQFKT) are disordered.

Belongs to the GEMC1 family. In terms of processing, highly phosphorylated by CDK2; stimulates initiation of DNA replication.

It localises to the nucleus. Regulator of DNA replication. Promotes initiation of chromosomal DNA replication by mediating TOPBP1- and CDK2-dependent recruitment of CDC45L onto replication origins. The chain is Geminin coiled-coil domain-containing protein 1 (Gmnc) from Mus musculus (Mouse).